We begin with the raw amino-acid sequence, 443 residues long: Serine/threonine-protein kinase 40 (443 aa).

The segment covering 1–11 (MKRRASERDAG) has biased composition (basic and acidic residues). The tract at residues 1–26 (MKRRASERDAGETSARSKALCSSISG) is disordered. Residues 14–26 (SARSKALCSSISG) are compositionally biased toward polar residues. The Protein kinase domain occupies 35-332 (FILGPRLGNS…EVLESLGAII (298 aa)). Residues 41 to 49 (LGNSPVPSI) and K66 contribute to the ATP site. Residue D197 is the Proton acceptor of the active site.

It belongs to the protein kinase superfamily. CAMK Ser/Thr protein kinase family.

It localises to the nucleus. The protein resides in the cytoplasm. The enzyme catalyses L-seryl-[protein] + ATP = O-phospho-L-seryl-[protein] + ADP + H(+). It catalyses the reaction L-threonyl-[protein] + ATP = O-phospho-L-threonyl-[protein] + ADP + H(+). Its function is as follows. May be a negative regulator of NF-kappa-B and p53-mediated gene transcription. The chain is Serine/threonine-protein kinase 40 (stk40) from Xenopus tropicalis (Western clawed frog).